The following is a 106-amino-acid chain: uncharacterized protein (106 aa).

This sequence to the N-terminal of E.carotovora exoenzyme regulation regulon ORF1. The C-terminal part is colinear with YqcB. The protein to E.coli YqcC.

This is an uncharacterized protein from Haemophilus influenzae (strain ATCC 51907 / DSM 11121 / KW20 / Rd).